The following is a 321-amino-acid chain: Lipoyl synthase (321 aa).

Positions 68, 73, 79, 94, 98, 101, and 308 each coordinate [4Fe-4S] cluster. Residues 80-297 (FNHGTATFMI…KAAAMDMGFT (218 aa)) form the Radical SAM core domain.

It belongs to the radical SAM superfamily. Lipoyl synthase family. It depends on [4Fe-4S] cluster as a cofactor.

The protein resides in the cytoplasm. It catalyses the reaction [[Fe-S] cluster scaffold protein carrying a second [4Fe-4S](2+) cluster] + N(6)-octanoyl-L-lysyl-[protein] + 2 oxidized [2Fe-2S]-[ferredoxin] + 2 S-adenosyl-L-methionine + 4 H(+) = [[Fe-S] cluster scaffold protein] + N(6)-[(R)-dihydrolipoyl]-L-lysyl-[protein] + 4 Fe(3+) + 2 hydrogen sulfide + 2 5'-deoxyadenosine + 2 L-methionine + 2 reduced [2Fe-2S]-[ferredoxin]. It participates in protein modification; protein lipoylation via endogenous pathway; protein N(6)-(lipoyl)lysine from octanoyl-[acyl-carrier-protein]: step 2/2. In terms of biological role, catalyzes the radical-mediated insertion of two sulfur atoms into the C-6 and C-8 positions of the octanoyl moiety bound to the lipoyl domains of lipoate-dependent enzymes, thereby converting the octanoylated domains into lipoylated derivatives. The polypeptide is Lipoyl synthase (Erwinia tasmaniensis (strain DSM 17950 / CFBP 7177 / CIP 109463 / NCPPB 4357 / Et1/99)).